We begin with the raw amino-acid sequence, 426 residues long: Testicular acid phosphatase (426 aa).

An N-terminal signal peptide occupies residues methionine 1 to alanine 26. Topologically, residues leucine 27 to proline 393 are extracellular. The active-site Nucleophile is the histidine 41. Intrachain disulfides connect cysteine 159-cysteine 378, cysteine 214-cysteine 312, and cysteine 353-cysteine 357. Residues asparagine 191 and asparagine 269 are each glycosylated (N-linked (GlcNAc...) asparagine). Catalysis depends on aspartate 289, which acts as the Proton donor. N-linked (GlcNAc...) asparagine glycans are attached at residues asparagine 330 and asparagine 339. A helical membrane pass occupies residues leucine 394–tryptophan 414. Residues arginine 415–valine 426 lie on the Cytoplasmic side of the membrane.

The protein belongs to the histidine acid phosphatase family. As to quaternary structure, homodimer. In terms of processing, glycosylated. As to expression, expressed mainly in the testis. Also expressed in the brain where they are enriched at the postsynaptic sites. Expressed at lower levels in the trachea, prostate, bone marrow, spinal cord, colon, fetal brain, heart, thymus, fetal liver, spleen, leukocytes, ovary, small intestine, pancreas and skeletal muscle. Expression is significantly lower in testicular cancer tissues than in normal testicular tissues. Isoform 3 is expressed in the testis, trachea, prostate and bone marrow.

It is found in the membrane. It carries out the reaction a phosphate monoester + H2O = an alcohol + phosphate. May dephosphorylate receptor tyrosine-protein kinase ERBB4 and inhibits its ligand-induced proteolytic cleavage. May play a role in odontogenesis. In Homo sapiens (Human), this protein is Testicular acid phosphatase.